The sequence spans 179 residues: ATP synthase subunit delta (179 aa).

The protein belongs to the ATPase delta chain family. F-type ATPases have 2 components, F(1) - the catalytic core - and F(0) - the membrane proton channel. F(1) has five subunits: alpha(3), beta(3), gamma(1), delta(1), epsilon(1). F(0) has three main subunits: a(1), b(2) and c(10-14). The alpha and beta chains form an alternating ring which encloses part of the gamma chain. F(1) is attached to F(0) by a central stalk formed by the gamma and epsilon chains, while a peripheral stalk is formed by the delta and b chains.

It is found in the cell membrane. Its function is as follows. F(1)F(0) ATP synthase produces ATP from ADP in the presence of a proton or sodium gradient. F-type ATPases consist of two structural domains, F(1) containing the extramembraneous catalytic core and F(0) containing the membrane proton channel, linked together by a central stalk and a peripheral stalk. During catalysis, ATP synthesis in the catalytic domain of F(1) is coupled via a rotary mechanism of the central stalk subunits to proton translocation. Functionally, this protein is part of the stalk that links CF(0) to CF(1). It either transmits conformational changes from CF(0) to CF(1) or is implicated in proton conduction. In Mycoplasmopsis pulmonis (strain UAB CTIP) (Mycoplasma pulmonis), this protein is ATP synthase subunit delta.